The primary structure comprises 221 residues: Late protein I196L (221 aa).

Tandem repeats lie at residues 28 to 48 (SNYL…PTTS), 49 to 69 (SNYS…PTTS), and 70 to 90 (SNYS…PTTS). One copy of the 4; approximate repeat lies at 91-112 (SNYSMTAIPNNISDKEDYTYFS).

This sequence belongs to the asfivirus I196L family.

The protein is Late protein I196L of African swine fever virus (isolate Tick/Malawi/Lil 20-1/1983) (ASFV).